Consider the following 450-residue polypeptide: Bifunctional protein GlmU (450 aa).

The tract at residues 1 to 236 (MTAHKPFSAV…AWEVSGVNNR (236 aa)) is pyrophosphorylase. Residues 12–15 (LAAG), Lys-26, Gln-79, 84–85 (GT), 107–109 (YGD), Gly-147, Glu-162, Asn-177, and Asn-234 contribute to the UDP-N-acetyl-alpha-D-glucosamine site. Asp-109 serves as a coordination point for Mg(2+). Asn-234 lines the Mg(2+) pocket. The interval 237–257 (AELASLESLWQNRKRQDVMKD) is linker. The segment at 258–450 (GASLIAPETV…KKFRQRKKKK (193 aa)) is N-acetyltransferase. 2 residues coordinate UDP-N-acetyl-alpha-D-glucosamine: Arg-323 and Lys-341. The Proton acceptor role is filled by His-353. Residues Tyr-356 and Asn-367 each coordinate UDP-N-acetyl-alpha-D-glucosamine. Acetyl-CoA contacts are provided by residues 376–377 (NY), Ser-395, Ala-413, and Arg-430.

In the N-terminal section; belongs to the N-acetylglucosamine-1-phosphate uridyltransferase family. It in the C-terminal section; belongs to the transferase hexapeptide repeat family. As to quaternary structure, homotrimer. The cofactor is Mg(2+).

It localises to the cytoplasm. It carries out the reaction alpha-D-glucosamine 1-phosphate + acetyl-CoA = N-acetyl-alpha-D-glucosamine 1-phosphate + CoA + H(+). The catalysed reaction is N-acetyl-alpha-D-glucosamine 1-phosphate + UTP + H(+) = UDP-N-acetyl-alpha-D-glucosamine + diphosphate. It participates in nucleotide-sugar biosynthesis; UDP-N-acetyl-alpha-D-glucosamine biosynthesis; N-acetyl-alpha-D-glucosamine 1-phosphate from alpha-D-glucosamine 6-phosphate (route II): step 2/2. Its pathway is nucleotide-sugar biosynthesis; UDP-N-acetyl-alpha-D-glucosamine biosynthesis; UDP-N-acetyl-alpha-D-glucosamine from N-acetyl-alpha-D-glucosamine 1-phosphate: step 1/1. It functions in the pathway bacterial outer membrane biogenesis; LPS lipid A biosynthesis. Its function is as follows. Catalyzes the last two sequential reactions in the de novo biosynthetic pathway for UDP-N-acetylglucosamine (UDP-GlcNAc). The C-terminal domain catalyzes the transfer of acetyl group from acetyl coenzyme A to glucosamine-1-phosphate (GlcN-1-P) to produce N-acetylglucosamine-1-phosphate (GlcNAc-1-P), which is converted into UDP-GlcNAc by the transfer of uridine 5-monophosphate (from uridine 5-triphosphate), a reaction catalyzed by the N-terminal domain. The sequence is that of Bifunctional protein GlmU from Zymomonas mobilis subsp. mobilis (strain ATCC 31821 / ZM4 / CP4).